We begin with the raw amino-acid sequence, 122 residues long: Large ribosomal subunit protein uL14 (122 aa).

It belongs to the universal ribosomal protein uL14 family. In terms of assembly, part of the 50S ribosomal subunit. Forms a cluster with proteins L3 and L19. In the 70S ribosome, L14 and L19 interact and together make contacts with the 16S rRNA in bridges B5 and B8.

Its function is as follows. Binds to 23S rRNA. Forms part of two intersubunit bridges in the 70S ribosome. In Clostridioides difficile (strain 630) (Peptoclostridium difficile), this protein is Large ribosomal subunit protein uL14.